The chain runs to 254 residues: 3-deoxy-manno-octulosonate cytidylyltransferase (254 aa).

It belongs to the KdsB family.

The protein resides in the cytoplasm. It catalyses the reaction 3-deoxy-alpha-D-manno-oct-2-ulosonate + CTP = CMP-3-deoxy-beta-D-manno-octulosonate + diphosphate. It functions in the pathway nucleotide-sugar biosynthesis; CMP-3-deoxy-D-manno-octulosonate biosynthesis; CMP-3-deoxy-D-manno-octulosonate from 3-deoxy-D-manno-octulosonate and CTP: step 1/1. Its pathway is bacterial outer membrane biogenesis; lipopolysaccharide biosynthesis. Its function is as follows. Activates KDO (a required 8-carbon sugar) for incorporation into bacterial lipopolysaccharide in Gram-negative bacteria. The sequence is that of 3-deoxy-manno-octulosonate cytidylyltransferase from Bordetella bronchiseptica (strain ATCC BAA-588 / NCTC 13252 / RB50) (Alcaligenes bronchisepticus).